A 458-amino-acid polypeptide reads, in one-letter code: Biphenyl dioxygenase subunit alpha (458 aa).

One can recognise a Rieske domain in the interval 58–156 (WLLLGHESHV…KEGDCGFDKA (99 aa)). [2Fe-2S] cluster contacts are provided by Cys-100, His-102, Cys-120, and His-123. Fe cation is bound by residues His-233 and His-239.

It belongs to the bacterial ring-hydroxylating dioxygenase alpha subunit family. Heterohexamer consisting of three BphA subunits and three BphE subunits. A ferredoxin (BphF) and a ferredoxin reductase (BphG) must be present to obtain activity. [2Fe-2S] cluster serves as cofactor. The cofactor is Fe cation.

It catalyses the reaction biphenyl + NADH + O2 + H(+) = (2R,3S)-3-phenylcyclohexa-3,5-diene-1,2-diol + NAD(+). Its pathway is xenobiotic degradation; biphenyl degradation; 2-hydroxy-2,4-pentadienoate and benzoate from biphenyl: step 1/4. This is Biphenyl dioxygenase subunit alpha (bphA) from Metapseudomonas furukawaii (Pseudomonas furukawaii).